A 225-amino-acid polypeptide reads, in one-letter code: Octanoyltransferase (225 aa).

In terms of domain architecture, BPL/LPL catalytic spans 43-225 (GTAPELVWLL…KTFRDVFGRG (183 aa)). Residues 82–89 (RGGQYTYH), 157–159 (AIG), and 170–172 (GVS) each bind substrate. The Acyl-thioester intermediate role is filled by Cys188.

Belongs to the LipB family.

The protein localises to the cytoplasm. The catalysed reaction is octanoyl-[ACP] + L-lysyl-[protein] = N(6)-octanoyl-L-lysyl-[protein] + holo-[ACP] + H(+). It participates in protein modification; protein lipoylation via endogenous pathway; protein N(6)-(lipoyl)lysine from octanoyl-[acyl-carrier-protein]: step 1/2. Its function is as follows. Catalyzes the transfer of endogenously produced octanoic acid from octanoyl-acyl-carrier-protein onto the lipoyl domains of lipoate-dependent enzymes. Lipoyl-ACP can also act as a substrate although octanoyl-ACP is likely to be the physiological substrate. This is Octanoyltransferase from Parvibaculum lavamentivorans (strain DS-1 / DSM 13023 / NCIMB 13966).